The sequence spans 564 residues: Keratin, type II cytoskeletal 6C (564 aa).

Low complexity predominate over residues 1 to 11 (MASTSTTIRSH). Residues 1–23 (MASTSTTIRSHSSSRRGFSANSA) are disordered. An N-acetylalanine modification is found at Ala2. The segment at 2 to 162 (ASTSTTIRSH…DPAIQRVRAE (161 aa)) is head. Phosphoserine is present on Ser60. The tract at residues 163-198 (EREQIKTLNNKFASFIDKVRFLEQQNKVLDTKWTLL) is coil 1A. One can recognise an IF rod domain in the interval 163–476 (EREQIKTLNN…KLLEGEECRL (314 aa)). The segment at 199-217 (QEQGTKTVRQNLEPLFEQY) is linker 1. Residues 218–309 (INNLRRQLDS…ALYDAELSQM (92 aa)) form a coil 1B region. The tract at residues 310 to 333 (QTHISDTSVVLSMDNNRNLDLDSI) is linker 12. The tract at residues 334 to 472 (IAEVKAQYEE…ATYRKLLEGE (139 aa)) is coil 2. The tract at residues 473–564 (ECRLNGEGVG…SSSSRKSYKH (92 aa)) is tail.

It belongs to the intermediate filament family. In terms of assembly, heterodimer of a type I and a type II keratin. KRT6 isomers associate with KRT16 and/or KRT17. As to expression, constitutively expressed in distinct types of epithelia such as those in oral mucosa, esophagus, papillae of tongue and hair follicle outer root sheath.

The sequence is that of Keratin, type II cytoskeletal 6C (KRT6C) from Homo sapiens (Human).